The chain runs to 92 residues: Small ribosomal subunit protein uS19c (92 aa).

Belongs to the universal ribosomal protein uS19 family.

It localises to the plastid. It is found in the chloroplast. Functionally, protein S19 forms a complex with S13 that binds strongly to the 16S ribosomal RNA. The polypeptide is Small ribosomal subunit protein uS19c (Thalassiosira pseudonana (Marine diatom)).